A 506-amino-acid chain; its full sequence is Probable malate:quinone oxidoreductase (506 aa).

It belongs to the MQO family. FAD is required as a cofactor.

The catalysed reaction is (S)-malate + a quinone = a quinol + oxaloacetate. It functions in the pathway carbohydrate metabolism; tricarboxylic acid cycle; oxaloacetate from (S)-malate (quinone route): step 1/1. This chain is Probable malate:quinone oxidoreductase, found in Rhodococcus jostii (strain RHA1).